The chain runs to 355 residues: Ubiquinone biosynthesis protein COQ4 homolog, mitochondrial (355 aa).

His-134, Asp-135, His-138, and Glu-150 together coordinate Zn(2+).

The protein belongs to the COQ4 family. As to quaternary structure, component of a multi-subunit COQ enzyme complex. Requires Zn(2+) as cofactor.

Its subcellular location is the mitochondrion inner membrane. The enzyme catalyses a 4-hydroxy-3-methoxy-5-(all-trans-polyprenyl)benzoate + H(+) = a 2-methoxy-6-(all-trans-polyprenyl)phenol + CO2. It functions in the pathway cofactor biosynthesis; ubiquinone biosynthesis. Its function is as follows. Lyase that catalyzes the C1-decarboxylation of 4-hydroxy-3-methoxy-5-(all-trans-polyprenyl)benzoic acid into 2-methoxy-6-(all-trans-polyprenyl)phenol during ubiquinone biosynthesis. In Plasmodium knowlesi (strain H), this protein is Ubiquinone biosynthesis protein COQ4 homolog, mitochondrial.